A 320-amino-acid chain; its full sequence is Phospho-N-acetylmuramoyl-pentapeptide-transferase (320 aa).

10 helical membrane-spanning segments follow: residues 7–27, 50–70, 77–97, 113–133, 148–168, 173–193, 198–216, 221–241, 247–267, and 297–317; these read ILAI…VIPF, GTPT…SLIF, IGAP…DDFI, LVLQ…HLGS, WAYV…VNLT, GLAS…SIFS, MAIF…LRYN, VVFM…AIAV, VLVL…MLQV, and VVVV…AMIQ.

This sequence belongs to the glycosyltransferase 4 family. MraY subfamily. Requires Mg(2+) as cofactor.

The protein localises to the cell membrane. It carries out the reaction UDP-N-acetyl-alpha-D-muramoyl-L-alanyl-gamma-D-glutamyl-meso-2,6-diaminopimeloyl-D-alanyl-D-alanine + di-trans,octa-cis-undecaprenyl phosphate = di-trans,octa-cis-undecaprenyl diphospho-N-acetyl-alpha-D-muramoyl-L-alanyl-D-glutamyl-meso-2,6-diaminopimeloyl-D-alanyl-D-alanine + UMP. It functions in the pathway cell wall biogenesis; peptidoglycan biosynthesis. Catalyzes the initial step of the lipid cycle reactions in the biosynthesis of the cell wall peptidoglycan: transfers peptidoglycan precursor phospho-MurNAc-pentapeptide from UDP-MurNAc-pentapeptide onto the lipid carrier undecaprenyl phosphate, yielding undecaprenyl-pyrophosphoryl-MurNAc-pentapeptide, known as lipid I. The sequence is that of Phospho-N-acetylmuramoyl-pentapeptide-transferase from Caldicellulosiruptor bescii (strain ATCC BAA-1888 / DSM 6725 / KCTC 15123 / Z-1320) (Anaerocellum thermophilum).